The primary structure comprises 241 residues: tRNA pseudouridine synthase A (241 aa).

Aspartate 51 acts as the Nucleophile in catalysis. Tyrosine 110 is a binding site for substrate.

The protein belongs to the tRNA pseudouridine synthase TruA family. In terms of assembly, homodimer.

It carries out the reaction uridine(38/39/40) in tRNA = pseudouridine(38/39/40) in tRNA. Functionally, formation of pseudouridine at positions 38, 39 and 40 in the anticodon stem and loop of transfer RNAs. In Campylobacter jejuni subsp. jejuni serotype O:23/36 (strain 81-176), this protein is tRNA pseudouridine synthase A.